Here is a 151-residue protein sequence, read N- to C-terminus: MSKIEQIAKDLVMPILEKNNFELVDVEYKKEGSHWYLRVYIDKEGGITLDDCQLVSEYLSDRLDEVDPIEHSYILEVSSPGLDRPLKKPRDFERNIGKEIEISLYTPIDKRKKFEGELIEFTGDKIIILYNGERKEFDMKNVSLVKPVIKF.

It belongs to the RimP family.

It is found in the cytoplasm. Its function is as follows. Required for maturation of 30S ribosomal subunits. This chain is Ribosome maturation factor RimP, found in Thermoanaerobacter sp. (strain X514).